We begin with the raw amino-acid sequence, 397 residues long: 4-hydroxyphenylpyruvate dioxygenase (397 aa).

VOC domains are found at residues 18 to 149 and 181 to 339; these read NFHH…FVEY and FIDH…IFTK. Residues histidine 184, histidine 267, and glutamate 350 each contribute to the Fe cation site.

Belongs to the 4HPPD family. In terms of assembly, homodimer. Requires Fe cation as cofactor.

Its subcellular location is the cytoplasm. It is found in the endoplasmic reticulum membrane. It localises to the golgi apparatus membrane. The catalysed reaction is 3-(4-hydroxyphenyl)pyruvate + O2 = homogentisate + CO2. It participates in amino-acid degradation; L-phenylalanine degradation; acetoacetate and fumarate from L-phenylalanine: step 3/6. Functionally, catalyzes the conversion of 4-hydroxyphenylpyruvic acid to homogentisic acid, one of the steps in tyrosine catabolism. The protein is 4-hydroxyphenylpyruvate dioxygenase (hpd) of Danio rerio (Zebrafish).